The sequence spans 77 residues: Acyl carrier protein (77 aa).

The 76-residue stretch at 2–77 (SSIEERVNKI…SAVDYIKAHS (76 aa)) folds into the Carrier domain. The residue at position 37 (Ser37) is an O-(pantetheine 4'-phosphoryl)serine.

It belongs to the acyl carrier protein (ACP) family. 4'-phosphopantetheine is transferred from CoA to a specific serine of apo-ACP by AcpS. This modification is essential for activity because fatty acids are bound in thioester linkage to the sulfhydryl of the prosthetic group.

It localises to the cytoplasm. It functions in the pathway lipid metabolism; fatty acid biosynthesis. In terms of biological role, carrier of the growing fatty acid chain in fatty acid biosynthesis. This is Acyl carrier protein from Alcanivorax borkumensis (strain ATCC 700651 / DSM 11573 / NCIMB 13689 / SK2).